The primary structure comprises 449 residues: Biotin carboxylase (449 aa).

Residues 4-448 enclose the Biotin carboxylation domain; the sequence is MIEKVLIANR…NIHYLEKMLG (445 aa). Residues Lys-119, Lys-162, 168 to 169, 204 to 207, His-212, and His-239 contribute to the ATP site; these read GG and EKYL. An ATP-grasp domain is found at 123-320; the sequence is IAAMKAAGVP…IVKEQILIAA (198 aa). Lys-241 is a binding site for hydrogencarbonate. Residues Glu-279 and Glu-291 each coordinate ATP. Mg(2+) is bound by residues Glu-279, Glu-291, and Asn-293. Mn(2+) contacts are provided by Glu-279, Glu-291, and Asn-293. Residues Arg-295, Val-298, and Arg-341 each contribute to the hydrogencarbonate site. Residue Arg-295 is part of the active site. Arg-341 is a binding site for biotin.

As to quaternary structure, acetyl-CoA carboxylase is a heterohexamer of biotin carboxyl carrier protein, biotin carboxylase and the two subunits of carboxyl transferase in a 2:2 complex. The cofactor is Mg(2+). It depends on Mn(2+) as a cofactor.

It carries out the reaction N(6)-biotinyl-L-lysyl-[protein] + hydrogencarbonate + ATP = N(6)-carboxybiotinyl-L-lysyl-[protein] + ADP + phosphate + H(+). It participates in lipid metabolism; malonyl-CoA biosynthesis; malonyl-CoA from acetyl-CoA: step 1/1. This protein is a component of the acetyl coenzyme A carboxylase complex; first, biotin carboxylase catalyzes the carboxylation of the carrier protein and then the transcarboxylase transfers the carboxyl group to form malonyl-CoA. The chain is Biotin carboxylase (accC) from Allochromatium vinosum (strain ATCC 17899 / DSM 180 / NBRC 103801 / NCIMB 10441 / D) (Chromatium vinosum).